The following is a 383-amino-acid chain: uncharacterized protein (383 aa).

The protein belongs to the peptidase M20 family.

This is an uncharacterized protein from Staphylococcus aureus (strain bovine RF122 / ET3-1).